Reading from the N-terminus, the 605-residue chain is MITPTSFEPVELLYSKKKVNRTNWKKNVLKSNPEINNLCERIYPINRAIQFGKQFHPGKAEVKQKLDKTAIIQLILQHLSTKGLKQTKQTLEKEARTTTPIVEGLNESRLVTYIRNALKDTDRIYDLSMEHTEYSKEERQSKITEREELLFQMDLLEDEDEDDGVNIWDEPTENIITEKVHTTEYDINKSKENKDDQDDEVVKFASLNKLVEHLTHDSKHDLQFLKTFLMTYQSFCTPEKLMSKLQQRYNCPSGHDEMATRNIQIRVINVLKGWVDNYYSDFDDKLIAMLRTFIDQIQIKFPAPASAVNKSLTKMVEKLSPVNDSKHIFNEKTPEPMVPKNIFSNNLSIYDIDEEEIARQLTLIEFEIYRNIKPPELLNQSWNKTKLKSRAPNVLKMIDRFNSVSMWVATMIIQTTKVKARARMMTRFIKIADHLKNLNNYNSLMAIIAGLNFSSVYRLKYTREELSAQTMRTYSDLEKIMNSEGSFKTYRTRLQNVPPMLPYLGVHLTDLTFIDENPNNFVTDVGGKQVSLINFTKRTLVFKIISLIQETQVVPYNLQPVHQIQEFLLNIRSDLKAHTLDQYQQELYRESLKREPKKAQRSDVL.

Residues 67-99 enclose the LisH domain; it reads DKTAIIQLILQHLSTKGLKQTKQTLEKEARTTT. The 123-residue stretch at 198 to 320 folds into the N-terminal Ras-GEF domain; it reads DDEVVKFASL…SLTKMVEKLS (123 aa). Positions 353-597 constitute a Ras-GEF domain; it reads DEEEIARQLT…YRESLKREPK (245 aa).

Component of the Sca1 complex composed of at least gefA, gefH, scaA, phr, and the protein phosphatase 2A subunits pppA and pho2B. Interacts directly with gefH.

Its subcellular location is the cell membrane. Ras-bound GDP/GTP exchange factor required for normal activation of adenylyl cyclase. Component of the Sca1 complex, a regulator of cell motility, chemotaxis and signal relay. The Sca1 complex is recruited to the plasma membrane in a chemoattractant- and F-actin-dependent manner and is enriched at the leading edge of chemotaxing cells where it regulates F-actin dynamics and signal relay by controlling the activation of rasC and the downstream target of rapamycin complex 2 (TORC2)-Akt/protein kinase B (PKB) pathway. In Dictyostelium discoideum (Social amoeba), this protein is Ras guanine nucleotide exchange factor A (gefA).